Here is a 123-residue protein sequence, read N- to C-terminus: Histone H2B.1/H2B.2 (123 aa).

The tract at residues M1 to K30 is disordered. An O-linked (GlcNAc) serine glycan is attached at S110. A Glycyl lysine isopeptide (Lys-Gly) (interchain with G-Cter in ubiquitin) cross-link involves residue K118.

Belongs to the histone H2B family. In terms of assembly, the nucleosome is a histone octamer containing two molecules each of H2A, H2B, H3 and H4 assembled in one H3-H4 heterotetramer and two H2A-H2B heterodimers. The octamer wraps approximately 147 bp of DNA. Monoubiquitination of Lys-118 gives a specific tag for epigenetic transcriptional activation and is also prerequisite for histone H3 'Lys-4' and 'Lys-79' methylation. In terms of processing, glcNAcylation at Ser-110 promotes monoubiquitination of Lys-118. It fluctuates in response to extracellular glucose, and associates with transcribed genes.

Its subcellular location is the nucleus. The protein localises to the chromosome. Functionally, core component of nucleosome. Nucleosomes wrap and compact DNA into chromatin, limiting DNA accessibility to the cellular machineries which require DNA as a template. Histones thereby play a central role in transcription regulation, DNA repair, DNA replication and chromosomal stability. DNA accessibility is regulated via a complex set of post-translational modifications of histones, also called histone code, and nucleosome remodeling. The sequence is that of Histone H2B.1/H2B.2 from Tigriopus californicus (Marine copepod).